A 1304-amino-acid chain; its full sequence is Splicing factor 3B subunit 1 (1304 aa).

2 disordered regions span residues 100–119 (QYDPFAEHRPPKIADREDEY) and 124–148 (RTMIISPERLDPFADGGKTPDPKMN). A compositionally biased stretch (basic and acidic residues) spans 104–119 (FAEHRPPKIADREDEY). Threonine 125 bears the Phosphothreonine mark. The residue at position 129 (serine 129) is a Phosphoserine. N6-acetyllysine is present on lysine 141. Threonine 142 is subject to Phosphothreonine. Arginine 157 is modified (citrulline). The tract at residues 172–360 (LAEKAKAGEL…PVLTPGKTPI (189 aa)) is disordered. Position 194 is a phosphoserine (serine 194). Threonine 203, threonine 207, and threonine 211 each carry phosphothreonine. An N6-acetyllysine; alternate modification is found at lysine 214. A Glycyl lysine isopeptide (Lys-Gly) (interchain with G-Cter in SUMO2); alternate cross-link involves residue lysine 214. Phosphothreonine is present on residues threonine 223 and threonine 227. An interaction with PPP1R8 region spans residues 223–491 (TPGHTPSLRW…VDESTLSPEE (269 aa)). The residue at position 229 (serine 229) is a Phosphoserine. Over residues 231–241 (RWDETPGRAKG) the composition is skewed to basic and acidic residues. 8 positions are modified to phosphothreonine: threonine 235, threonine 244, threonine 248, threonine 257, threonine 261, threonine 267, threonine 273, and threonine 278. Serine 287 carries the post-translational modification Phosphoserine. Positions 291–304 (NRWDETPKTERDTP) are enriched in basic and acidic residues. A phosphothreonine mark is found at threonine 296, threonine 299, threonine 303, and threonine 313. Residue serine 322 is modified to Phosphoserine. A phosphothreonine mark is found at threonine 326 and threonine 328. The residue at position 332 (serine 332) is a Phosphoserine. Phosphothreonine is present on threonine 341. Residues 342–352 (PASQMGGSTPV) show a composition bias toward polar residues. 2 positions are modified to phosphoserine: serine 344 and serine 349. Threonine 350 and threonine 354 each carry phosphothreonine. The residue at position 400 (serine 400) is a Phosphoserine. A Glycyl lysine isopeptide (Lys-Gly) (interchain with G-Cter in SUMO2); alternate cross-link involves residue lysine 413. Lysine 413 participates in a covalent cross-link: Glycyl lysine isopeptide (Lys-Gly) (interchain with G-Cter in SUMO1); alternate. Threonine 426 is modified (phosphothreonine). A Glycyl lysine isopeptide (Lys-Gly) (interchain with G-Cter in SUMO2) cross-link involves residue lysine 430. Residue threonine 434 is modified to Phosphothreonine; by DYRK1A. Position 436 is a phosphothreonine (threonine 436). Serine 488 is modified (phosphoserine). HEAT repeat units lie at residues 529–568 (GPLFNQILPLLMSPTLEDQERHLLVKVIDRILYKLDDLVR), 569–603 (PYVHKILVVIEPLLIDEDYYARVEGREIISNLAKA), 604–641 (AGLATMISTMRPDIDNMDEYVRNTTARAFAVVASALGI), 643–677 (SLLPFLKAVCKSKKSWQARHTGIKIVQQIAILMGC), 680–718 (LPHLRSLVEIIEHGLVDEQQKVRTISALAIAALAEAATP), 763–801 (NYYTREVMLILIREFQSPDEEMKKIVLKVVKQCCGTDGV), 843–881 (KVGAAEIISRIVDDLKDEAEQYRKMVMETIEKIMGNLGA), 1010–1048 (TPPIKDLLPRLTPILKNRHEKVQENCIDLVGRIADRGAE), 1052–1090 (AREWMRICFELLELLKAHKKAIRRATVNTFGYIAKAIGP), 1122–1160 (TCSPFTVLPALMNEYRVPELNVQNGVLKSLSFLFEYIGE), and 1163–1201 (KDYIYAVTPLLEDALMDRDLVHRQTASAVVQHMSLGVYG). The segment at 547-550 (QERH) is interaction with PHF5A. Residues lysine 554 and lysine 562 each carry the N6-acetyllysine modification. The tract at residues 1156-1157 (EY) is interaction with PHF5A. Residues 1248–1304 (QYCLQGLFHPARKVRDVYWKIYNSIYIGSQDALIAHYPRIYNDDKNTYIRYDLDYIL) form an interaction with SF3B3 and SF3B5 region.

Belongs to the SF3B1 family. Component of the 17S U2 SnRNP complex, a ribonucleoprotein complex that contains small nuclear RNA (snRNA) U2 and a number of specific proteins. Part of the SF3B subcomplex of the 17S U2 SnRNP complex. SF3B associates with the splicing subcomplex SF3A and a 12S RNA unit to form the U2 small nuclear ribonucleoproteins complex (U2 snRNP). Within the SF3B complex, interacts directly (via HEAT domain) with SF3B3, SF3B5, SF3B6 and (via HEAT domain) with PHF5A. The SF3B subcomplex interacts with U2AF2. Identified in the spliceosome C complex. Component of the minor (U12-type spliceosome) spliceosome. Within the minor spliceosome complex, interacts with SCNM1 and CRIPT. Component of the B-WICH complex, at least composed of SMARCA5/SNF2H, BAZ1B/WSTF, SF3B1, DEK, MYO1C, ERCC6, MYBBP1A and DDX21. Phosphorylated form interacts with PPP1R8. Interacts with PQBP1. Interacts with RBM17. Interacts with RBM39. Interacts with SETX. Interacts with RBM15. Interacts with USH1G. Interacts with SDE2. Interacts with U2AF1. Interacts with CACTIN. Interacts with ZRSR1. Interacts with CYREN. In terms of processing, phosphorylated. Phosphorylation occurs concomitantly with the splicing catalytic steps. Phosphorylation on Thr-244, Thr-248 and Thr-313 by cyclin-dependent kinases promotes interaction with PPP1R8 during mitosis. Post-translationally, citrullinated by PADI4. As to expression, ubiquitous.

Its subcellular location is the nucleus. It is found in the nucleus speckle. Functionally, component of the 17S U2 SnRNP complex of the spliceosome, a large ribonucleoprotein complex that removes introns from transcribed pre-mRNAs. The 17S U2 SnRNP complex (1) directly participates in early spliceosome assembly and (2) mediates recognition of the intron branch site during pre-mRNA splicing by promoting the selection of the pre-mRNA branch-site adenosine, the nucleophile for the first step of splicing. Within the 17S U2 SnRNP complex, SF3B1 is part of the SF3B subcomplex, which is required for 'A' complex assembly formed by the stable binding of U2 snRNP to the branchpoint sequence in pre-mRNA. Sequence independent binding of SF3A and SF3B subcomplexes upstream of the branch site is essential, it may anchor U2 snRNP to the pre-mRNA. May also be involved in the assembly of the 'E' complex. Also acts as a component of the minor spliceosome, which is involved in the splicing of U12-type introns in pre-mRNAs. Together with other U2 snRNP complex components may also play a role in the selective processing of microRNAs (miRNAs) from the long primary miRNA transcript, pri-miR-17-92. The chain is Splicing factor 3B subunit 1 from Mus musculus (Mouse).